The following is a 217-amino-acid chain: Peroxiredoxin Q, chloroplastic (217 aa).

The transit peptide at 1–66 (MAFAASTACC…RRRAASTGIV (66 aa)) directs the protein to the chloroplast. Residues 70-217 (VSKGSVPPNF…GETLKIIQNL (148 aa)) form the Thioredoxin domain. The Cysteine sulfenic acid (-SOH) intermediate role is filled by Cys112. Cys112 and Cys117 are disulfide-bonded.

This sequence belongs to the peroxiredoxin family. BCP/PrxQ subfamily. In terms of assembly, monomer.

It localises to the plastid. The protein localises to the chloroplast thylakoid lumen. It catalyses the reaction a hydroperoxide + [thioredoxin]-dithiol = an alcohol + [thioredoxin]-disulfide + H2O. Its function is as follows. Thiol-specific peroxidase that catalyzes the reduction of hydrogen peroxide and organic hydroperoxides to water and alcohols, respectively. Plays a role in cell protection against oxidative stress by detoxifying peroxides. This chain is Peroxiredoxin Q, chloroplastic (PRX1), found in Triticum aestivum (Wheat).